Consider the following 126-residue polypeptide: Ribosome-binding factor A (126 aa).

It belongs to the RbfA family. Monomer. Binds 30S ribosomal subunits, but not 50S ribosomal subunits or 70S ribosomes.

The protein localises to the cytoplasm. In terms of biological role, one of several proteins that assist in the late maturation steps of the functional core of the 30S ribosomal subunit. Associates with free 30S ribosomal subunits (but not with 30S subunits that are part of 70S ribosomes or polysomes). Required for efficient processing of 16S rRNA. May interact with the 5'-terminal helix region of 16S rRNA. This chain is Ribosome-binding factor A, found in Treponema pallidum (strain Nichols).